The chain runs to 62 residues: Sperm protamine P1 (62 aa).

Residues 1–62 (MARYRHSRSR…RYSRRRRRRY (62 aa)) form a disordered region.

The protein belongs to the protamine P1 family. In terms of tissue distribution, testis.

The protein localises to the nucleus. It localises to the chromosome. Its function is as follows. Protamines substitute for histones in the chromatin of sperm during the haploid phase of spermatogenesis. They compact sperm DNA into a highly condensed, stable and inactive complex. This Wallabia bicolor (Swamp wallaby) protein is Sperm protamine P1 (PRM1).